A 304-amino-acid chain; its full sequence is Non-specific ribonucleoside hydrolase RihC (304 aa).

His233 is an active-site residue.

It belongs to the IUNH family. RihC subfamily.

Hydrolyzes both purine and pyrimidine ribonucleosides with a broad-substrate specificity. This Escherichia coli O139:H28 (strain E24377A / ETEC) protein is Non-specific ribonucleoside hydrolase RihC.